Consider the following 120-residue polypeptide: UPF0102 protein Daro_0503 (120 aa).

The segment at 1–20 (MQVKANDTTTARGREAEDRA) is disordered.

Belongs to the UPF0102 family.

This Dechloromonas aromatica (strain RCB) protein is UPF0102 protein Daro_0503.